Here is a 1404-residue protein sequence, read N- to C-terminus: MRSHNDFESITIRLASPERIKEWSYGEVKKPETINYRTLKPEKDGLFCEKIFGTTKDWECYCGKFKSIRYKGVICDKCGVEVTHSKVRRERMGHIELAAPVSHIWYYRSVPSRMGLLLDMTVNQLKSVLYFEKYVIIDPADSGRSRGELIDEEEYHGYLDEYGDKFVAGIGADAIKELLARIDVDAEARMIRQKIQDKDKISDKRILKRLEVLEAFRDSGNRPEWMVLDIVPVIPPELRPMVQLEGGRFATSDLNDLYRRVINRNNRLKRLLALKAPEIIVRNEKRMLQEAVDALFDNSRRKRAVKGKGNRPLKSISDMLKGKQGRFRQNLLGKRVDYSGRSVIVVGPELKYHEMGLPKKMALELFKPFIMKRLVDLDLAPNIKSAKKKVEAEDKEVFDVLEYVVKEHPVMLNRAPTLHRLGIQAFLPVLVEGKAIKLHPLVCHAFNADFDGDQMAIHVPLTPKAQLETWMLMLSPHNILNPANGHPICGPTQDIVLGIYYLTSELPSEPGAPLKSFSNLDEVHYAIDRGVVEFRTKISVYHQGKILETTPGRLIFNTILPEGYAYVNRPLSDKETNRIIADVYDKYGPAKTVLMLDDIKKLGYRYATLFVPTISIEDIRVSPGKVGLVGDANKEVEKADSEYRKGIITNEERRKKVIEIWTKTNDLITESMFKELEKDKGGFNPVFIMAASGARGSKQQIRQLAGMRGLMAKPSGEIIELAIRSNFREGLSVLEFFISTHGARKGLADTALKTADAGYLTRRLVDISQDVIISEDDCGTEESISLGIVKEGENVIVSLNDRVFGRYTAEDVIDPVTDKVVYPRNTLITREVGQKVENLGYDKIRVRSPLTCESKQGVCIRCYGMDMARLIPAEIGEAVGTIAAQSIGQPGTQLTMRTFHIGGAASAKVQEKEHKVSYTGIVNNINGRLITNEKSQSVFSRRGSIVIQRLIQQYKTEELSNLRVENGQKVDKGELVATSPSGENITSAMPGAVHIENGIFRILGEEAVIPVKTGTVVNVKVNDITQPNQPLAEFDPYNEVGISEIDGTVQWMDLEIGKNVRRDEDLRTSNILLKVIEQRREKLNPRIAVISGGSREEYSVPVDAIISVQDGDKVKAGDILFKIPTVAEKTRDITGGLPRVDELFEARRPKDATTLAETDGKIEISGEIVKEKRVLYIHPDNPDQEKVKVTIPIGKQIRVRNGDFVKRGDQIDDGNLDPHDILRVKGVTALQVYLVQEVQEVYRLQGVHINDKHIEVVVRQMLRKVLITDSGDTSFVNQQQIDRLMFNEENKRVIAEGGSPAESVPILLGLTKASLNTESFFSAASFQETTKVLTDAAIKGKTDNLMGLKENVIIGHMIPAGTGTKKYKDISVFKSAYGDLDRPLEEEEEEEIPQSIADDSDGDE.

Positions 60, 62, 75, and 78 each coordinate Zn(2+). Positions 449, 451, and 453 each coordinate Mg(2+). Residues Cys778, Cys852, Cys859, and Cys862 each contribute to the Zn(2+) site. Positions 1381-1404 are disordered; the sequence is DRPLEEEEEEEIPQSIADDSDGDE. The segment covering 1384–1404 has biased composition (acidic residues); sequence LEEEEEEEIPQSIADDSDGDE.

The protein belongs to the RNA polymerase beta' chain family. In terms of assembly, the RNAP catalytic core consists of 2 alpha, 1 beta, 1 beta' and 1 omega subunit. When a sigma factor is associated with the core the holoenzyme is formed, which can initiate transcription. Mg(2+) serves as cofactor. Requires Zn(2+) as cofactor.

The catalysed reaction is RNA(n) + a ribonucleoside 5'-triphosphate = RNA(n+1) + diphosphate. Its function is as follows. DNA-dependent RNA polymerase catalyzes the transcription of DNA into RNA using the four ribonucleoside triphosphates as substrates. The chain is DNA-directed RNA polymerase subunit beta' from Leptospira borgpetersenii serovar Hardjo-bovis (strain L550).